The sequence spans 1140 residues: uncharacterized protein (1140 aa).

Transmembrane regions (helical) follow at residues 8-28 and 1098-1118; these read FLLF…SAFT and IAIT…SGVV.

It to M.pneumoniae MPN_375 (in the N-terminal section), M.pneumoniae MPN_374 (in the central section) and M.pneumoniae MPN_373 (in the C-terminal section).

It localises to the cell membrane. This is an uncharacterized protein from Mycoplasma pneumoniae (strain ATCC 29342 / M129 / Subtype 1) (Mycoplasmoides pneumoniae).